The following is a 68-amino-acid chain: Cx9C motif-containing protein 4 (68 aa).

The CHCH domain occupies 4-46 (KDPCQKQACEIQKCLQANNYLESKCQAVIQELRKCCARYPKGR). 2 consecutive short sequence motifs (cx9C motif) follow at residues 7 to 17 (CQKQACEIQKC) and 28 to 38 (CQAVIQELRKC). 3 disulfides stabilise this stretch: Cys7-Cys38, Cys17-Cys28, and Cys39-Cys50.

The protein belongs to the CMC4 family. Expressed in many tissues.

The protein resides in the mitochondrion. This chain is Cx9C motif-containing protein 4 (Cmc4), found in Mus musculus (Mouse).